The sequence spans 127 residues: Small ribosomal subunit protein uS13 (127 aa).

Positions 95–127 are disordered; the sequence is GLPVHGQRTSTNARTRKGPRRAAVKKKGGAKKK. Residues 108–127 are compositionally biased toward basic residues; that stretch reads RTRKGPRRAAVKKKGGAKKK.

It belongs to the universal ribosomal protein uS13 family. As to quaternary structure, part of the 30S ribosomal subunit. Forms a loose heterodimer with protein S19. Forms two bridges to the 50S subunit in the 70S ribosome.

Functionally, located at the top of the head of the 30S subunit, it contacts several helices of the 16S rRNA. In the 70S ribosome it contacts the 23S rRNA (bridge B1a) and protein L5 of the 50S subunit (bridge B1b), connecting the 2 subunits; these bridges are implicated in subunit movement. Contacts the tRNAs in the A and P-sites. The protein is Small ribosomal subunit protein uS13 of Desulfatibacillum aliphaticivorans.